A 192-amino-acid polypeptide reads, in one-letter code: Xanthine phosphoribosyltransferase (192 aa).

Leucine 20 and asparagine 27 together coordinate xanthine. Residue 128 to 132 (ANGDA) coordinates 5-phospho-alpha-D-ribose 1-diphosphate. Xanthine is bound at residue lysine 156.

The protein belongs to the purine/pyrimidine phosphoribosyltransferase family. Xpt subfamily. In terms of assembly, homodimer.

It is found in the cytoplasm. It carries out the reaction XMP + diphosphate = xanthine + 5-phospho-alpha-D-ribose 1-diphosphate. Its pathway is purine metabolism; XMP biosynthesis via salvage pathway; XMP from xanthine: step 1/1. Converts the preformed base xanthine, a product of nucleic acid breakdown, to xanthosine 5'-monophosphate (XMP), so it can be reused for RNA or DNA synthesis. The chain is Xanthine phosphoribosyltransferase from Staphylococcus epidermidis (strain ATCC 35984 / DSM 28319 / BCRC 17069 / CCUG 31568 / BM 3577 / RP62A).